A 540-amino-acid polypeptide reads, in one-letter code: Methionine--tRNA ligase 1 (540 aa).

Residues 10–20 (PYANGSLHLGH) carry the 'HIGH' region motif. Zn(2+) is bound by residues Cys141, Cys144, Cys153, and Cys156. The 'KMSKS' region motif lies at 327-331 (KISTS). Residue Thr330 coordinates ATP.

The protein belongs to the class-I aminoacyl-tRNA synthetase family. MetG type 1 subfamily. In terms of assembly, monomer. The cofactor is Zn(2+).

It localises to the cytoplasm. The catalysed reaction is tRNA(Met) + L-methionine + ATP = L-methionyl-tRNA(Met) + AMP + diphosphate. Its function is as follows. Is required not only for elongation of protein synthesis but also for the initiation of all mRNA translation through initiator tRNA(fMet) aminoacylation. In Alkaliphilus oremlandii (strain OhILAs) (Clostridium oremlandii (strain OhILAs)), this protein is Methionine--tRNA ligase 1.